The sequence spans 511 residues: Early growth response protein 1 (511 aa).

Disordered regions lie at residues 133–169 (ASIPSSTSQATHPSSSSTSSIPSSSSSSTSSASLSCS) and 291–312 (PSRMRKYPNRPSKTPPHERPYA). Low complexity predominate over residues 137-169 (SSTSQATHPSSSSTSSIPSSSSSSTSSASLSCS). 3 C2H2-type zinc fingers span residues 311–335 (YACPVETCDRRFSRSDELTRHIRIH), 341–363 (FQCRICMRNFSRSDHLTTHIRTH), and 369–391 (FACEICGRKFARSDERKRHTKIH). Positions 384–406 (RKRHTKIHMRQKDKKAEKGATAA) are disordered. Positions 386 to 396 (RHTKIHMRQKD) are enriched in basic residues.

The protein belongs to the EGR C2H2-type zinc-finger protein family. In terms of tissue distribution, detected in muscle and brain.

It is found in the nucleus. It localises to the cytoplasm. Functionally, transcriptional regulator. Recognizes and binds to the DNA sequence 5'-GCG(T/G)GGGCG-3'(EGR-site) in the promoter region of target genes. Binds double-stranded target DNA, irrespective of the cytosine methylation status. Regulates the transcription of numerous target genes, and thereby plays an important role in regulating the response to growth factors, DNA damage, and ischemia. Plays a role in the regulation of cell survival, proliferation and cell death. Mediates responses to ischemia and hypoxia; regulates the expression of proteins that are involved in inflammatory processes. Plays a role in regulating the expression of circadian clock genes. Plays a role in the organization of Muller glia cells in the inner and outer plexiform layers of the retina. This Danio rerio (Zebrafish) protein is Early growth response protein 1 (egr1).